The sequence spans 166 residues: Interferon gamma (166 aa).

The first 23 residues, methionine 1 to glycine 23, serve as a signal peptide directing secretion. Position 24 is a pyrrolidone carboxylic acid (glutamine 24). N-linked (GlcNAc...) asparagine glycans are attached at residues asparagine 39 and asparagine 106.

The protein belongs to the type II (or gamma) interferon family. Homodimer. Interacts with IFNGR1 (via extracellular domain); this interaction promotes IFNGR1 dimerization. Released primarily from activated T lymphocytes.

The protein resides in the secreted. Type II interferon produced by immune cells such as T-cells and NK cells that plays crucial roles in antimicrobial, antiviral, and antitumor responses by activating effector immune cells and enhancing antigen presentation. Primarily signals through the JAK-STAT pathway after interaction with its receptor IFNGR1 to affect gene regulation. Upon IFNG binding, IFNGR1 intracellular domain opens out to allow association of downstream signaling components JAK2, JAK1 and STAT1, leading to STAT1 activation, nuclear translocation and transcription of IFNG-regulated genes. Many of the induced genes are transcription factors such as IRF1 that are able to further drive regulation of a next wave of transcription. Plays a role in class I antigen presentation pathway by inducing a replacement of catalytic proteasome subunits with immunoproteasome subunits. In turn, increases the quantity, quality, and repertoire of peptides for class I MHC loading. Increases the efficiency of peptide generation also by inducing the expression of activator PA28 that associates with the proteasome and alters its proteolytic cleavage preference. Up-regulates as well MHC II complexes on the cell surface by promoting expression of several key molecules such as cathepsins B/CTSB, H/CTSH, and L/CTSL. Participates in the regulation of hematopoietic stem cells during development and under homeostatic conditions by affecting their development, quiescence, and differentiation. The polypeptide is Interferon gamma (IFNG) (Ovis aries (Sheep)).